We begin with the raw amino-acid sequence, 763 residues long: Thyrotropin receptor (763 aa).

The first 21 residues, 1-21, serve as a signal peptide directing secretion; sequence MRQTPLLQLALLLSLPRSLGG. The Extracellular portion of the chain corresponds to 22-412; that stretch reads KGCPSPPCEC…EFNPCEDIMG (391 aa). An intrachain disulfide couples Cys31 to Cys41. Residues Asn77 and Asn99 are each glycosylated (N-linked (GlcNAc...) asparagine). LRR repeat units lie at residues 100–124, 125–150, 151–174, 176–199, 201–223, 225–248, and 264–288; these read LSKMTHIEIRNTRSLTYIDPGALKE, LPLLKFLGIFNTGLGVFPDLTKVYST, DVFFILEITDNPYMTSIPANAFQG, CNETLTLKLYNNGFTSIQGHAFNG, KLDAVYLNKNKYLTAIDQDAFGG, YSGPTLLDVSYTSVTALPSKGLEH, and PLTLSFLHLTRADLSYPSHCCAFKN. 2 N-linked (GlcNAc...) asparagine glycosylation sites follow: Asn177 and Asn198. Asn302 carries N-linked (GlcNAc...) asparagine glycosylation. Tyr384 is subject to Sulfotyrosine. A helical transmembrane segment spans residues 413 to 440; sequence YKFLRIVVWFVSLLALLGNVFVLIILLT. Over 441–449 the chain is Cytoplasmic; it reads SHYKLTVPR. A helical transmembrane segment spans residues 450–472; that stretch reads FLMCNLAFADFCMGMYLLLIASV. Topologically, residues 473-493 are extracellular; sequence DLYTHSEYYNHAIDWQTGPGC. A disulfide bond links Cys493 and Cys568. The chain crosses the membrane as a helical span at residues 494 to 516; sequence NAAGFFTVFASELSVYTLTVITL. Residues 517 to 536 are Cytoplasmic-facing; sequence ERWYAITFAMRLDRKMRLRH. The chain crosses the membrane as a helical span at residues 537–559; sequence AYAIMVGGWVCCFLLALLPLVGI. Topologically, residues 560-579 are extracellular; that stretch reads SSYAKVSICLPMDTETPLAL. The helical transmembrane segment at 580–601 threads the bilayer; sequence AYIILVLLLNIVAFIIVCSCYV. Residues 602–624 are Cytoplasmic-facing; that stretch reads KIYITVRNPQYNTGDKDTKIAKR. A helical membrane pass occupies residues 625–648; that stretch reads MAVLIFTDFMCMAPISFYALSALM. Over 649–659 the chain is Extracellular; that stretch reads NKPLITVTNSK. A helical membrane pass occupies residues 660–681; sequence ILLVLFYPLNSCANPFLYAIFT. Over 682–763 the chain is Cytoplasmic; sequence KTFQRDVFIL…ISKEYNQTVL (82 aa). A PDZ-binding motif is present at residues 761-763; sequence TVL.

Belongs to the G-protein coupled receptor 1 family. FSH/LSH/TSH subfamily. As to quaternary structure, interacts with heterodimer GPHA2:GPHB5; this interaction stimulates cAMP production. Interacts (via the PDZ-binding motif) with SCRIB; regulates TSHR trafficking and function. Glycosylated. In terms of processing, sulfated. Sulfation on Tyr-384 plays a role in thyrotropin receptor binding and activation.

The protein resides in the cell membrane. It is found in the basolateral cell membrane. Functionally, receptor for the thyroid-stimulating hormone (TSH) or thyrotropin. Also acts as a receptor for the heterodimeric glycoprotein hormone (GPHA2:GPHB5) or thyrostimulin. The activity of this receptor is mediated by G proteins which activate adenylate cyclase. Plays a central role in controlling thyroid cell metabolism. The sequence is that of Thyrotropin receptor (TSHR) from Felis catus (Cat).